The primary structure comprises 113 residues: Large ribosomal subunit protein eL36z (113 aa).

Positions 78 to 88 are enriched in basic residues; it reads RKLGTHKRAKR. Residues 78–113 form a disordered region; sequence RKLGTHKRAKRKREEMSSVLRKMRSLGGAAAAEKKM.

Belongs to the eukaryotic ribosomal protein eL36 family.

The chain is Large ribosomal subunit protein eL36z (RPL36A) from Arabidopsis thaliana (Mouse-ear cress).